The chain runs to 212 residues: MPARLDARATRRYFDSAFNSPAVKILPNEYYVTNGEDVMLSTVLGSCVAACIHDPVIGVGGMNHFMLPEGDIHSPASATMRYGAFAMEVLINELLKAGAVRERLEAKVFGGGAVLSAMQLMNIGERNGQFVLNYLKTEGIPVRAQDLGDVHARRINYFPRDGRVMVRKMAPHHQKAEALIAQREAAAAQTVQAETRAAPRVERFARPGGMPV.

Belongs to the CheD family.

The enzyme catalyses L-glutaminyl-[protein] + H2O = L-glutamyl-[protein] + NH4(+). Functionally, probably deamidates glutamine residues to glutamate on methyl-accepting chemotaxis receptors (MCPs), playing an important role in chemotaxis. This Bordetella parapertussis (strain 12822 / ATCC BAA-587 / NCTC 13253) protein is Probable chemoreceptor glutamine deamidase CheD.